The sequence spans 491 residues: Trehalose-6-phosphate synthase (491 aa).

Arg-22 provides a ligand contact to D-glucose 6-phosphate. Residue 42–43 (GG) coordinates UDP-alpha-D-glucose. The D-glucose 6-phosphate site is built by Tyr-100 and Asp-154. Positions 296 and 301 each coordinate UDP-alpha-D-glucose. Arg-334 serves as a coordination point for D-glucose 6-phosphate. 399 to 403 (LVAKE) is a UDP-alpha-D-glucose binding site.

The protein belongs to the glycosyltransferase 20 family. Homotetramer.

It carries out the reaction ADP-alpha-D-glucose + D-glucose 6-phosphate = alpha,alpha-trehalose 6-phosphate + ADP + H(+). It catalyses the reaction CDP-alpha-D-glucose + D-glucose 6-phosphate = alpha,alpha-trehalose 6-phosphate + CDP + H(+). The catalysed reaction is GDP-alpha-D-glucose + D-glucose 6-phosphate = alpha,alpha-trehalose 6-phosphate + GDP + H(+). The enzyme catalyses TDP-alpha-D-glucose + D-glucose 6-phosphate = 5-methyl-UDP + alpha,alpha-trehalose 6-phosphate + H(+). It carries out the reaction D-glucose 6-phosphate + UDP-alpha-D-glucose = alpha,alpha-trehalose 6-phosphate + UDP + H(+). The protein operates within glycan biosynthesis; trehalose biosynthesis. Its function is as follows. Probably involved in the osmoprotection via the biosynthesis of trehalose and in the production of glycogen and alpha-glucan via the TreS-Pep2 branch involved in the biosynthesis of maltose-1-phosphate (M1P). Catalyzes the transfer of glucose from UDP-glucose (UDP-Glc) to D-glucose 6-phosphate (Glc-6-P) to form trehalose-6-phosphate. Probably also able to use ADP-Glc, CDP-Glc, GDP-Glc and TDP-Glc as glucosyl donors. The polypeptide is Trehalose-6-phosphate synthase (Mycolicibacterium vanbaalenii (strain DSM 7251 / JCM 13017 / BCRC 16820 / KCTC 9966 / NRRL B-24157 / PYR-1) (Mycobacterium vanbaalenii)).